A 179-amino-acid chain; its full sequence is Peptidyl-tRNA hydrolase (179 aa).

Y14 serves as a coordination point for tRNA. H19 functions as the Proton acceptor in the catalytic mechanism. Positions 60, 62, and 108 each coordinate tRNA.

This sequence belongs to the PTH family. In terms of assembly, monomer.

It localises to the cytoplasm. The enzyme catalyses an N-acyl-L-alpha-aminoacyl-tRNA + H2O = an N-acyl-L-amino acid + a tRNA + H(+). Hydrolyzes ribosome-free peptidyl-tRNAs (with 1 or more amino acids incorporated), which drop off the ribosome during protein synthesis, or as a result of ribosome stalling. Its function is as follows. Catalyzes the release of premature peptidyl moieties from peptidyl-tRNA molecules trapped in stalled 50S ribosomal subunits, and thus maintains levels of free tRNAs and 50S ribosomes. The sequence is that of Peptidyl-tRNA hydrolase from Mycoplasma mobile (strain ATCC 43663 / 163K / NCTC 11711) (Mesomycoplasma mobile).